The primary structure comprises 467 residues: Multiple inositol polyphosphate phosphatase 1 (467 aa).

The N-terminal stretch at 1-15 is a signal peptide; it reads MRLLILLLLPLVAIA. Histidine 67 is an active-site residue. Residues asparagine 120, asparagine 159, and asparagine 234 are each glycosylated (N-linked (GlcNAc...) asparagine). A lipid anchor (GPI-anchor amidated glycine) is attached at glycine 441. Residues 442 to 467 constitute a propeptide, removed in mature form; that stretch reads GAPSLGSGVGGLLATTLAAMLVYLMH.

The protein belongs to the histidine acid phosphatase family. MINPP1 subfamily. Post-translationally, N-glycosylated.

The protein resides in the cell membrane. Its subcellular location is the apical cell membrane. It localises to the basolateral cell membrane. The protein localises to the cell projection. It is found in the filopodium. The protein resides in the cell junction. The catalysed reaction is (2R)-2,3-bisphosphoglycerate + H2O = (2R)-2-phosphoglycerate + phosphate. It catalyses the reaction 1D-myo-inositol hexakisphosphate + H2O = 1D-myo-inositol 1,2,4,5,6-pentakisphosphate + phosphate. The enzyme catalyses 1D-myo-inositol 1,2,4,5,6-pentakisphosphate + H2O = 1D-myo-inositol 1,2,5,6-tetrakisphosphate + phosphate. It carries out the reaction 1D-myo-inositol 1,2,5,6-tetrakisphosphate + H2O = 1D-myo-inositol 1,2,6-trisphosphate + phosphate. Its function is as follows. Probable multiple inositol polyphosphate phosphatase that hydrolyzes 1D-myo-inositol 1,3,4,5,6-pentakisphosphate (InsP5[2OH]) and 1D-myo-inositol hexakisphosphate (InsP6) to a range of less phosphorylated inositol phosphates. This regulates the availability of these various small molecule second messengers and metal chelators which control many aspects of cell physiology. May have a dual substrate specificity, and function as a 2,3-bisphosphoglycerate 3-phosphatase hydrolyzing 2,3-bisphosphoglycerate to 2-phosphoglycerate. 2,3-bisphosphoglycerate (BPG) is formed as part of the Rapoport-Luebering glycolytic bypass. Has a role in embryonic tracheal development where it localizes to the leading edge of actively migrating branches. In these leading cells, enhances formation and/or maintenance of filopodia which may drive branch migration and elongation by cell-cell intercalation. The function in tracheal morphogenesis is dependent on its inositol polyphosphate phosphatase activity. The sequence is that of Multiple inositol polyphosphate phosphatase 1 from Drosophila melanogaster (Fruit fly).